Consider the following 403-residue polypeptide: Argininosuccinate synthase (403 aa).

10 to 18 (AYSGGLDTS) serves as a coordination point for ATP. Y87 serves as a coordination point for L-citrulline. ATP is bound at residue G117. Residues T119, N123, and D124 each coordinate L-aspartate. N123 is an L-citrulline binding site. Positions 127, 175, 184, 260, and 272 each coordinate L-citrulline.

It belongs to the argininosuccinate synthase family. Type 1 subfamily. As to quaternary structure, homotetramer.

Its subcellular location is the cytoplasm. The catalysed reaction is L-citrulline + L-aspartate + ATP = 2-(N(omega)-L-arginino)succinate + AMP + diphosphate + H(+). Its pathway is amino-acid biosynthesis; L-arginine biosynthesis; L-arginine from L-ornithine and carbamoyl phosphate: step 2/3. In Bacillus licheniformis (strain ATCC 14580 / DSM 13 / JCM 2505 / CCUG 7422 / NBRC 12200 / NCIMB 9375 / NCTC 10341 / NRRL NRS-1264 / Gibson 46), this protein is Argininosuccinate synthase.